Reading from the N-terminus, the 132-residue chain is Fatty acid-binding protein, adipocyte (132 aa).

Cys-2 is subject to N-acetylcysteine. Ser-13 is subject to Phosphoserine. A Phosphotyrosine; by Tyr-kinases modification is found at Tyr-20. A Nuclear localization signal motif is present at residues 22-32 (KEVGVGFATRK). An a fatty acid-binding site is contributed by 127-129 (RVY).

It belongs to the calycin superfamily. Fatty-acid binding protein (FABP) family. Monomer. Homodimer. Interacts with PPARG.

The protein localises to the cytoplasm. It localises to the nucleus. Functionally, lipid transport protein in adipocytes. Binds both long chain fatty acids and retinoic acid. Delivers long-chain fatty acids and retinoic acid to their cognate receptors in the nucleus. This Mus musculus (Mouse) protein is Fatty acid-binding protein, adipocyte (Fabp4).